The sequence spans 641 residues: 1-deoxy-D-xylulose-5-phosphate synthase (641 aa).

Residues H71 and 112–114 (SHA) contribute to the thiamine diphosphate site. Residue D144 coordinates Mg(2+). Residues 145–146 (GA), N173, Y284, and E365 each bind thiamine diphosphate. Mg(2+) is bound at residue N173.

The protein belongs to the transketolase family. DXPS subfamily. As to quaternary structure, homodimer. Mg(2+) serves as cofactor. Thiamine diphosphate is required as a cofactor.

The catalysed reaction is D-glyceraldehyde 3-phosphate + pyruvate + H(+) = 1-deoxy-D-xylulose 5-phosphate + CO2. It functions in the pathway metabolic intermediate biosynthesis; 1-deoxy-D-xylulose 5-phosphate biosynthesis; 1-deoxy-D-xylulose 5-phosphate from D-glyceraldehyde 3-phosphate and pyruvate: step 1/1. In terms of biological role, catalyzes the acyloin condensation reaction between C atoms 2 and 3 of pyruvate and glyceraldehyde 3-phosphate to yield 1-deoxy-D-xylulose-5-phosphate (DXP). This Mycobacterium avium (strain 104) protein is 1-deoxy-D-xylulose-5-phosphate synthase.